The sequence spans 903 residues: Pentatricopeptide repeat-containing protein At3g02330, mitochondrial (903 aa).

The N-terminal 31 residues, 1–31, are a transit peptide targeting the mitochondrion; the sequence is MAESLRLLHMTRSVVSFNRCLTEKISYRRVP. 20 PPR repeats span residues 47-81, 82-112, 113-143, 144-178, 179-213, 214-244, 245-279, 280-314, 346-380, 381-415, 416-446, 447-481, 482-515, 516-550, 567-601, 602-636, 637-667, 668-702, 703-738, and 739-769; these read STTNFSFVFKECAKQGALELGKQAHAHMIISGFRP, TTFVLNCLLQVYTNSRDFVSASMVFDKMPLR, DVVSWNKMINGYSKSNDMFKANSFFNMMPVR, DVVSWNSMLSGYLQNGESLKSIEVFVDMGREGIEF, DGRTFAIILKVCSFLEDTSLGMQIHGIVVRVGCDT, DVVAASALLDMYAKGKRFVESLRVFQGIPEK, NSVSWSAIIAGCVQNNLLSLALKFFKEMQKVNAGV, SQSIYASVLRSCAALSELRLGGQLHAHALKSDFAA, NRQSYNAMITGYSQEEHGFKALLLFHRLMSSGLGF, DEISLSGVFRACALVKGLSEGLQIYGLAIKSSLSL, DVCVANAAIDMYGKCQALAEAFRVFDEMRRR, DAVSWNAIIAAHEQNGKGYETLFLFVSMLRSRIEP, DEFTFGSILKACTGGSLGYGMEIHSSIVKSGMAS, NSSVGCSLIDMYSKCGMIEEAEKIHSRFFQRANVS, MCVSWNSIISGYVMKEQSEDAQMLFTRMMEMGITP, DKFTYATVLDTCANLASAGLGKQIHAQVIKKELQS, DVYICSTLVDMYSKCGDLHDSRLMFEKSLRR, DFVTWNAMICGYAHHGKGEEAIQLFERMILENIKP, NHVTFISILRACAHMGLIDKGLEYFYMMKRDYGLDP, and QLPHYSNMVDILGKSGKVKRALELIREMPFE. The tract at residues 774–850 is type E motif; it reads IWRTLLGVCT…EPGCSWVELK (77 aa). Residues 851 to 881 form a type E(+) motif region; that stretch reads DELHVFLVGDKAHPRWEEIYEELGLIYSEMK.

The protein belongs to the PPR family. PCMP-E subfamily. Interacts with MORF1/RIP8.

The protein resides in the mitochondrion. Functionally, involved in C-to-U editing of mitochondrial RNA. Required for RNA editing at 8 sites in 6 different mRNAs in mitochondria. The chain is Pentatricopeptide repeat-containing protein At3g02330, mitochondrial (PCMP-E90) from Arabidopsis thaliana (Mouse-ear cress).